The primary structure comprises 405 residues: Tyrosine-protein phosphatase non-receptor type eak-6 (405 aa).

A Tyrosine-protein phosphatase domain is found at 30-309 (INQRINIIAD…SFIYDIIIKY (280 aa)). Cys248 functions as the Phosphocysteine intermediate in the catalytic mechanism.

The protein belongs to the protein-tyrosine phosphatase family. As to expression, expressed in the 2 embryonic head hypodermal cells XXXL/R.

Its subcellular location is the cytoplasm. The protein localises to the cell membrane. It catalyses the reaction O-phospho-L-tyrosyl-[protein] + H2O = L-tyrosyl-[protein] + phosphate. Putative phosphatase which, together with eak-4 and sdf-9, negatively regulates dauer larva formation downstream of insulin-like receptor daf-2 and in parallel of age-1, pdk-1 and akt-1. In Caenorhabditis elegans, this protein is Tyrosine-protein phosphatase non-receptor type eak-6.